The chain runs to 249 residues: Exosome complex component Rrp41 (249 aa).

Belongs to the RNase PH family. Rrp41 subfamily. As to quaternary structure, component of the archaeal exosome complex. Forms a hexameric ring-like arrangement composed of 3 Rrp41-Rrp42 heterodimers. The hexameric ring associates with a trimer of Rrp4 and/or Csl4 subunits.

The protein localises to the cytoplasm. Catalytic component of the exosome, which is a complex involved in RNA degradation. Has 3'-&gt;5' exoribonuclease activity. Can also synthesize heteromeric RNA-tails. The chain is Exosome complex component Rrp41 from Thermococcus gammatolerans (strain DSM 15229 / JCM 11827 / EJ3).